The following is a 281-amino-acid chain: CCAAT/enhancer-binding protein epsilon (281 aa).

A disordered region spans residues M1–L30. Residue K121 forms a Glycyl lysine isopeptide (Lys-Gly) (interchain with G-Cter in SUMO2) linkage. Residue S181 is modified to Phosphoserine. Residues S204–I267 form the bZIP domain. Residues R208–R245 are basic motif. Residues L246 to I267 are leucine-zipper.

It belongs to the bZIP family. C/EBP subfamily. As to quaternary structure, binds DNA as a homodimer and as a heterodimer. Can form stable heterodimers with CEBPA, CEBPB and CEBPD. Interacts with GATA1 and SPI1. Interacts with SMARCD2.

The protein resides in the nucleus. Functionally, transcriptional activator. C/EBP are DNA-binding proteins that recognize two different motifs: the CCAAT homology common to many promoters and the enhanced core homology common to many enhancers. Required for the promyelocyte-myelocyte transition in myeloid differentiation. This is CCAAT/enhancer-binding protein epsilon (Cebpe) from Rattus norvegicus (Rat).